Consider the following 165-residue polypeptide: Cytochrome c-type biogenesis protein CcmE (165 aa).

The Cytoplasmic portion of the chain corresponds to 1–29 (MSATAEQNARNPKGKGGFARTVSQRKRKR). The helical; Signal-anchor for type II membrane protein transmembrane segment at 30–50 (LFLIGGALAVLAVAVGLMLTA) threads the bilayer. Topologically, residues 51-165 (FNQDIRFFRT…LKKKGVWEGK (115 aa)) are periplasmic. 2 residues coordinate heme: H143 and Y147.

It belongs to the CcmE/CycJ family.

The protein localises to the cell inner membrane. In terms of biological role, heme chaperone required for the biogenesis of c-type cytochromes. Transiently binds heme delivered by CcmC and transfers the heme to apo-cytochromes in a process facilitated by CcmF and CcmH. This chain is Cytochrome c-type biogenesis protein CcmE, found in Brucella canis (strain ATCC 23365 / NCTC 10854 / RM-666).